Here is a 54-residue protein sequence, read N- to C-terminus: uncharacterized protein (54 aa).

This is an uncharacterized protein from Saccharomyces cerevisiae (strain ATCC 204508 / S288c) (Baker's yeast).